A 500-amino-acid chain; its full sequence is Probable cytosol aminopeptidase (500 aa).

Mn(2+)-binding residues include Lys267 and Asp272. Residue Lys279 is part of the active site. Mn(2+) contacts are provided by Asp290, Asp349, and Glu351. Arg353 is an active-site residue.

This sequence belongs to the peptidase M17 family. It depends on Mn(2+) as a cofactor.

The protein resides in the cytoplasm. It catalyses the reaction Release of an N-terminal amino acid, Xaa-|-Yaa-, in which Xaa is preferably Leu, but may be other amino acids including Pro although not Arg or Lys, and Yaa may be Pro. Amino acid amides and methyl esters are also readily hydrolyzed, but rates on arylamides are exceedingly low.. It carries out the reaction Release of an N-terminal amino acid, preferentially leucine, but not glutamic or aspartic acids.. In terms of biological role, presumably involved in the processing and regular turnover of intracellular proteins. Catalyzes the removal of unsubstituted N-terminal amino acids from various peptides. The protein is Probable cytosol aminopeptidase of Tolumonas auensis (strain DSM 9187 / NBRC 110442 / TA 4).